The sequence spans 562 residues: Protein wntless (562 aa).

Residues 1-13 (MSGTILENLSGRK) lie on the Cytoplasmic side of the membrane. A helical transmembrane segment spans residues 14–34 (LSILVASLLLCQVFCFLLGGL). Over 35–239 (YAPLPAGHVT…AIHQNGGFTQ (205 aa)) the chain is Lumenal. The N-linked (GlcNAc...) asparagine glycan is linked to Asn58. Residues 240–260 (IWLMLKTVLFPFVVGIMIWFW) traverse the membrane as a helical segment. Over 261-270 (RRVHLLQRSP) the chain is Cytoplasmic. A helical membrane pass occupies residues 271-291 (ALLEYMLIYLGGALTFLNLPL). The Lumenal portion of the chain corresponds to 292–311 (EYLSLVVEMPYMLLLSDIRQ). A helical membrane pass occupies residues 312-332 (GIFYAMLLSFWLVFAGEHMLI). The Cytoplasmic portion of the chain corresponds to 333-344 (QDAPNKSTIRSR). A helical membrane pass occupies residues 345–365 (YWKHLSAVVVGCISLFVFDIC). The Lumenal segment spans residues 366 to 390 (ERGVQLRNPFYSIWTTPLGAKVAMT). A helical transmembrane segment spans residues 391–411 (FIILAGVSAAIYFLFLCYMIW). The Cytoplasmic portion of the chain corresponds to 412-441 (KVFRNIGDKRTSLPSMSQARRLHYEGLIYR). A helical transmembrane segment spans residues 442–462 (FKFLMLATLLCAALTVAGFIM). The Lumenal segment spans residues 463-482 (GQMAEGQWQWNDNVEIQLTS). The chain crosses the membrane as a helical span at residues 483–503 (AFLTGVYGMWNIYIFALLILY). Topologically, residues 504-562 (APSHKQWPTMHHSDETTQSNENIVASAASEEIEFSHLPSDSNPSEISSLTSFTRKVAFD) are cytoplasmic. The disordered stretch occupies residues 539-562 (HLPSDSNPSEISSLTSFTRKVAFD). Positions 541-556 (PSDSNPSEISSLTSFT) are enriched in polar residues.

Belongs to the wntless family. Interacts with wg; in the Golgi. Interacts with Vps35, a component of the retromer complex; wls stability is regulated by Vps35.

The protein resides in the presynaptic cell membrane. It localises to the postsynaptic cell membrane. The protein localises to the cell membrane. Its subcellular location is the endoplasmic reticulum membrane. It is found in the endosome membrane. The protein resides in the golgi apparatus membrane. Functionally, a segment polarity gene required for wingless (wg)-dependent patterning processes, acting in both wg-sending cells and wg-target cells. In non-neuronal cells wls directs wg secretion. The wls traffic loop encompasses the Golgi, the cell surface, an endocytic compartment and a retrograde route leading back to the Golgi, and involves clathrin-mediated endocytosis and the retromer complex (a conserved protein complex consisting of Vps35 and Vps26). In neuronal cells (the larval motorneuron NMJ), the wg signal moves across the synapse via the release of wls-containing exosome-like vesicles. Postsynaptic wls is required for the trafficking of fz2 through the fz2-interacting protein Grip. The chain is Protein wntless from Drosophila ananassae (Fruit fly).